The primary structure comprises 1359 residues: Tripeptidyl-peptidase 2 (1359 aa).

Positions 45–81 (AASTTTRGGPSPSAGVAPRAMPSSSSSPPSAAEGTTA) are disordered. A compositionally biased stretch (low complexity) spans 64–81 (AMPSSSSSPPSAAEGTTA). Positions 102 to 600 (EIGVDRFLAA…HGLLQVDRAF (499 aa)) constitute a Peptidase S8 domain. Active-site charge relay system residues include Asp126, His353, and Ser539.

The protein belongs to the peptidase S8 family.

It catalyses the reaction Release of an N-terminal tripeptide from a polypeptide.. Serine protease that may function in the proteasome pathway. This is Tripeptidyl-peptidase 2 (TPP2) from Oryza sativa subsp. japonica (Rice).